A 314-amino-acid polypeptide reads, in one-letter code: WD repeat domain-containing protein 83 (314 aa).

WD repeat units follow at residues 23–62, 65–104, 107–146, 151–188, 189–228, 231–272, and 275–313; these read CNQGAVRAVRFNVDGNYCMTCGSDKTLKLWNPHKGTLLKT, GHGYEVLDTAGSYDNSQMCSCSSDKTVILWDVAQGQVVRK, GHAGKVNCVQFNEEATVIMSGSIDSSIRCWDCRSRRPEAI, EAKDGISSIKISDHEILAGSVDGNLRRYDLRKGEMCAD, YLGSPITCVSFSQDSQCLLASSLDSTLRLLDKDTGELLGE, GHQN…LVLK, and VGKAAVQSLSFHPSECCLLTASEGGVQLWRGASYEEEGG.

Belongs to the WD repeat MORG1 family.

Its subcellular location is the cytoplasm. Molecular scaffold protein for various multimeric protein complexes. Acts as a module in the assembly of a multicomponent scaffold for the ERK pathway, linking ERK responses to specific agonists. Also involved in response to hypoxia by acting as a negative regulator of HIF1A/HIF-1-alpha. This Xenopus tropicalis (Western clawed frog) protein is WD repeat domain-containing protein 83 (wdr83).